The chain runs to 194 residues: Large ribosomal subunit protein bL25 (194 aa).

The protein belongs to the bacterial ribosomal protein bL25 family. CTC subfamily. Part of the 50S ribosomal subunit; part of the 5S rRNA/L5/L18/L25 subcomplex. Contacts the 5S rRNA. Binds to the 5S rRNA independently of L5 and L18.

In terms of biological role, this is one of the proteins that binds to the 5S RNA in the ribosome where it forms part of the central protuberance. In Parabacteroides distasonis (strain ATCC 8503 / DSM 20701 / CIP 104284 / JCM 5825 / NCTC 11152), this protein is Large ribosomal subunit protein bL25.